The following is a 338-amino-acid chain: NADPH dehydrogenase (338 aa).

An FMN-binding site is contributed by 22–25; sequence SPMC. Tyr27 is a substrate binding site. FMN is bound by residues Ala59 and Gln101. 163-166 contacts substrate; that stretch reads HAAH. FMN contacts are provided by residues Arg214 and 306–307; that span reads GR.

The protein belongs to the NADH:flavin oxidoreductase/NADH oxidase family. NamA subfamily. As to quaternary structure, homotetramer. Requires FMN as cofactor.

The catalysed reaction is A + NADPH + H(+) = AH2 + NADP(+). In terms of biological role, catalyzes the reduction of the double bond of an array of alpha,beta-unsaturated aldehydes and ketones. It also reduces the nitro group of nitroester and nitroaromatic compounds. It could have a role in detoxification processes. In Listeria monocytogenes serotype 4b (strain CLIP80459), this protein is NADPH dehydrogenase.